The sequence spans 401 residues: S-adenosylmethionine synthase (401 aa).

Residue 136–141 (GQGSVD) coordinates ATP.

The protein belongs to the AdoMet synthase 2 family. The cofactor is Mg(2+).

The catalysed reaction is L-methionine + ATP + H2O = S-adenosyl-L-methionine + phosphate + diphosphate. The protein operates within amino-acid biosynthesis; S-adenosyl-L-methionine biosynthesis; S-adenosyl-L-methionine from L-methionine: step 1/1. Functionally, catalyzes the formation of S-adenosylmethionine from methionine and ATP. The chain is S-adenosylmethionine synthase (mat) from Pyrococcus abyssi (strain GE5 / Orsay).